A 676-amino-acid polypeptide reads, in one-letter code: MEQQPLTLTAATTRAQELRKQLNQYSHEYYVKDQPSVEDYVYDRLYKELVDIETEFPDLITPDSPTQRVGGKVLSGFEKAPHDIPMYSLNDGFSKEDIFAFDERVRKAIGKPVAYCCELKIDGLAISLRYENGVFVRGATRGDGTVGENITENLRTVRSVPMRLTEPISVEVRGECYMPKQSFVALNEEREENGQDIFANPRNAAAGSLRQLDTKIVAKRNLNTFLYTVADFGPMKAKTQFEALEELSAIGFRTNPERQLCQSIDEVWAYIEEYHEKRSTLPYEIDGIVIKVNEFALQDELGFTVKAPRWAIAYKFPPEEAETVVEDIEWTIGRTGVVTPTAVMAPVRVAGTTVSRASLHNADFIQMKDIRLNDHVIIYKAGDIIPEVAQVLVEKRAADSQPYEMPTHCPICHSELVHLDEEVALRCINPKCPAQIKEGLNHFVSRNAMNIDGLGPRVLAQMYDKGLVKDVADLYFLTEEQLMTLDKIKEKSANNIYTAIQGSKENSVERLIFGLGIRHVGAKAAKILAEHFGDLPTLSRATAEEIVALDSIGETIADSVVTYFENEEVHELMAELEKAQVNLTYKGLRTEQLAEVESPFKDKTVVLTGKLAQYTREEAKEKIENLGGKVTGSVSKKTDIVVAGEDAGSKLTKAESLGVTVWNEQEMVDALDASHF.

NAD(+) is bound by residues 39-43 (DYVYD), 88-91 (SLND), and glutamate 118. Lysine 120 (N6-AMP-lysine intermediate) is an active-site residue. Arginine 141, glutamate 175, lysine 291, and lysine 315 together coordinate NAD(+). Residues cysteine 409, cysteine 412, cysteine 427, and cysteine 432 each coordinate Zn(2+). Positions 595–676 (EVESPFKDKT…MVDALDASHF (82 aa)) constitute a BRCT domain.

It belongs to the NAD-dependent DNA ligase family. LigA subfamily. Mg(2+) serves as cofactor. Requires Mn(2+) as cofactor.

It carries out the reaction NAD(+) + (deoxyribonucleotide)n-3'-hydroxyl + 5'-phospho-(deoxyribonucleotide)m = (deoxyribonucleotide)n+m + AMP + beta-nicotinamide D-nucleotide.. DNA ligase that catalyzes the formation of phosphodiester linkages between 5'-phosphoryl and 3'-hydroxyl groups in double-stranded DNA using NAD as a coenzyme and as the energy source for the reaction. It is essential for DNA replication and repair of damaged DNA. This Enterococcus faecalis (strain ATCC 700802 / V583) protein is DNA ligase.